A 666-amino-acid chain; its full sequence is DEAD-box ATP-dependent RNA helicase 30 (666 aa).

A disordered region spans residues 53–102; sequence PDPNLPRRLPFPSSSSTPTAAAPPDSGEPSRARARTETYRTGDMNPYDLR. Residues 64 to 76 are compositionally biased toward low complexity; sequence PSSSSTPTAAAPP. Residues 80–92 are compositionally biased toward basic and acidic residues; it reads EPSRARARTETYR. The Q motif motif lies at 251-279; the sequence is RYFQEANFPDYCMQAIAKSGFVEPTPIQS. One can recognise a Helicase ATP-binding domain in the interval 282 to 457; sequence WPMALKGRDM…RQFLQNPYKV (176 aa). 295–302 lines the ATP pocket; the sequence is AQTGSGKT. The DEAD box signature appears at 405–408; that stretch reads DEAD. The Helicase C-terminal domain maps to 485–630; sequence RLSKLLSDLM…VVNPALESMA (146 aa). A disordered region spans residues 632-666; sequence SASSMGGGNFRSRGRGGFGNRSGSNSIPIRGRRPY. Gly residues predominate over residues 636–651; that stretch reads MGGGNFRSRGRGGFGN.

It belongs to the DEAD box helicase family. DDX5/DBP2 subfamily.

The protein resides in the nucleus. The catalysed reaction is ATP + H2O = ADP + phosphate + H(+). In terms of biological role, ATP-dependent RNA helicase involved nonsense-mediated mRNA decay and ribosome biogenesis through rRNA processing. The chain is DEAD-box ATP-dependent RNA helicase 30 from Oryza sativa subsp. japonica (Rice).